A 601-amino-acid polypeptide reads, in one-letter code: Regulatory protein BlaR1 (601 aa).

Residues 1–8 are Extracellular-facing; sequence MSSSFFIP. A helical membrane pass occupies residues 9 to 26; sequence FLVSQILLSLFFSIIILI. Over 27–35 the chain is Cytoplasmic; it reads KKLLRTQIT. A helical transmembrane segment spans residues 36 to 52; that stretch reads VGTHYYISVISLLALIA. Over 53 to 115 the chain is Extracellular; that stretch reads PFIPFHFLKS…EQSSSKMIDS (63 aa). A helical transmembrane segment spans residues 116 to 133; the sequence is AFFAVWILGVAVMLLATL. Residues 134–322 are Cytoplasmic-facing; sequence YSNLKIGKIK…QTASPLLKAK (189 aa). The helical transmembrane segment at 323 to 339 threads the bilayer; it reads SALVFTLVLGAILAGTP. Topologically, residues 340–601 are extracellular; the sequence is SVSILAMQKE…KKGIYPSVSR (262 aa). The segment at 354–601 is beta-lactam antibiotic sensor domain; that stretch reads PGTNVEYEDY…KKGIYPSVSR (248 aa). Serine 402 functions as the Acyl-ester intermediate in the catalytic mechanism. At lysine 405 the chain carries N6-carboxylysine.

It belongs to the peptidase M56 family. Post-translationally, carboxylation occurs on two lysine residues. Carboxylation at 'Lys-405' activates the active site serine residue for acylation. On acylation, the lysine side chain experiences a spontaneous decarboxylation that entraps the sensor in its activated state.

The protein localises to the cell membrane. Integral membrane protein involved in sensing of the presence of beta-lactam antibiotics and transduction of the information to the cytoplasm. Mechanistically, activation of the signal transducer involves acylation of a serine in the C-terminal sensor domain upon binding of the beta-lactam antibiotic. In turn, a conformational change occurs and the signal is transmitted from the cell surface to the cytoplasm. There, the zinc protease domain is activated and initiates autoproteolysis as well as cleavage of the transcriptional repressor BlaI leading to derepression of antibiotic resistance genes. In Bacillus licheniformis, this protein is Regulatory protein BlaR1 (blaR1).